Here is a 98-residue protein sequence, read N- to C-terminus: uncharacterized protein (98 aa).

This is an uncharacterized protein from Human cytomegalovirus (strain AD169) (HHV-5).